Consider the following 208-residue polypeptide: Large ribosomal subunit protein uL3 (208 aa).

At glutamine 149 the chain carries N5-methylglutamine.

Belongs to the universal ribosomal protein uL3 family. As to quaternary structure, part of the 50S ribosomal subunit. Forms a cluster with proteins L14 and L19. Methylated by PrmB.

In terms of biological role, one of the primary rRNA binding proteins, it binds directly near the 3'-end of the 23S rRNA, where it nucleates assembly of the 50S subunit. The sequence is that of Large ribosomal subunit protein uL3 from Histophilus somni (strain 129Pt) (Haemophilus somnus).